The sequence spans 298 residues: Apolipoprotein E (298 aa).

Positions 1–18 (MKVLWAALVVTLLAGCQA) are cleaved as a signal peptide. Repeat copies occupy residues 74–95 (LLME…QELA), 96–117 (PMAE…SRLR), 118–139 (ADME…TMMG), 140–161 (QSGE…KRLL), 162–183 (RDVE…EGAE), and 223–244 (GRLE…EQME). The interval 74–244 (LLMEDTMKEV…RLEEVREQME (171 aa)) is 8 X 22 AA approximate tandem repeats. At Met137 the chain carries Methionine sulfoxide. Ser141 bears the Phosphoserine mark. The tract at residues 152 to 162 (HLRKLRKRLLR) is LDL and other lipoprotein receptors binding. Residue 156-159 (LRKR) participates in heparin binding. Residues 204 to 272 (SLPSQPLRER…SWFEPMMEDM (69 aa)) form a lipid-binding and lipoprotein association region. 218–225 (GEQMRGRL) serves as a coordination point for heparin. A specificity for association with VLDL region spans residues 260 to 272 (RFKSWFEPMMEDM).

This sequence belongs to the apolipoprotein A1/A4/E family. Homotetramer. May interact with ABCA1; functionally associated with ABCA1 in the biogenesis of HDLs. May interact with APP/A4 amyloid-beta peptide; the interaction is extremely stable in vitro but its physiological significance is unclear. May interact with MAPT. May interact with MAP2. In the cerebrospinal fluid, interacts with secreted SORL1. Interacts with PMEL; this allows the loading of PMEL luminal fragment on ILVs to induce fibril nucleation. Post-translationally, APOE exists as multiple glycosylated and sialylated glycoforms within cells and in plasma. The extent of glycosylation and sialylation are tissue and context specific. In terms of processing, glycated in plasma VLDL. Phosphorylated by FAM20C in the extracellular medium.

The protein localises to the secreted. Its subcellular location is the extracellular space. It is found in the extracellular matrix. It localises to the extracellular vesicle. The protein resides in the endosome. The protein localises to the multivesicular body. In terms of biological role, APOE is an apolipoprotein, a protein associating with lipid particles, that mainly functions in lipoprotein-mediated lipid transport between organs via the plasma and interstitial fluids. APOE is a core component of plasma lipoproteins and is involved in their production, conversion and clearance. Apolipoproteins are amphipathic molecules that interact both with lipids of the lipoprotein particle core and the aqueous environment of the plasma. As such, APOE associates with chylomicrons, chylomicron remnants, very low density lipoproteins (VLDL) and intermediate density lipoproteins (IDL) but shows a preferential binding to high-density lipoproteins (HDL). It also binds a wide range of cellular receptors including the LDL receptor/LDLR, the LDL receptor-related proteins LRP1, LRP2 and LRP8 and the very low-density lipoprotein receptor/VLDLR that mediate the cellular uptake of the APOE-containing lipoprotein particles. Finally, APOE also has a heparin-binding activity and binds heparan-sulfate proteoglycans on the surface of cells, a property that supports the capture and the receptor-mediated uptake of APOE-containing lipoproteins by cells. A main function of APOE is to mediate lipoprotein clearance through the uptake of chylomicrons, VLDLs, and HDLs by hepatocytes. APOE is also involved in the biosynthesis by the liver of VLDLs as well as their uptake by peripheral tissues ensuring the delivery of triglycerides and energy storage in muscle, heart and adipose tissues. By participating in the lipoprotein-mediated distribution of lipids among tissues, APOE plays a critical role in plasma and tissues lipid homeostasis. APOE is also involved in two steps of reverse cholesterol transport, the HDLs-mediated transport of cholesterol from peripheral tissues to the liver, and thereby plays an important role in cholesterol homeostasis. First, it is functionally associated with ABCA1 in the biogenesis of HDLs in tissues. Second, it is enriched in circulating HDLs and mediates their uptake by hepatocytes. APOE also plays an important role in lipid transport in the central nervous system, regulating neuron survival and sprouting. The polypeptide is Apolipoprotein E (APOE) (Dasyprocta punctata (Central American agouti)).